Here is a 563-residue protein sequence, read N- to C-terminus: Arginine--tRNA ligase (563 aa).

The protein belongs to the class-I aminoacyl-tRNA synthetase family. As to quaternary structure, monomer.

The catalysed reaction is tRNA(Arg) + L-arginine + ATP = L-arginyl-tRNA(Arg) + AMP + diphosphate. The chain is Arginine--tRNA ligase from Encephalitozoon cuniculi (strain GB-M1) (Microsporidian parasite).